Consider the following 90-residue polypeptide: Small ribosomal subunit protein mS37 (90 aa).

C27 and C58 form a disulfide bridge.

Belongs to the mitochondrion-specific ribosomal protein mS37 family. In terms of assembly, component of the mitochondrial small ribosomal subunit (mt-SSU). Mature N.crassa 74S mitochondrial ribosomes consist of a small (37S) and a large (54S) subunit. The 37S small subunit contains a 16S ribosomal RNA (16S mt-rRNA) and 32 different proteins. The 54S large subunit contains a 23S rRNA (23S mt-rRNA) and 42 different proteins.

The protein localises to the mitochondrion. Component of the mitochondrial ribosome (mitoribosome), a dedicated translation machinery responsible for the synthesis of mitochondrial genome-encoded proteins, including at least some of the essential transmembrane subunits of the mitochondrial respiratory chain. The mitoribosomes are attached to the mitochondrial inner membrane and translation products are cotranslationally integrated into the membrane. The protein is Small ribosomal subunit protein mS37 (mrp10) of Neurospora crassa (strain ATCC 24698 / 74-OR23-1A / CBS 708.71 / DSM 1257 / FGSC 987).